The chain runs to 436 residues: Protein FAM83A (436 aa).

A DUF1669 region spans residues 1–298; that stretch reads MSRSRHVGKI…LYASSKPLMG (298 aa). The disordered stretch occupies residues 73–95; sequence AQAKEPPDAPDSAGGAESGPRGL. Ser-301, Ser-329, Ser-350, and Ser-359 each carry phosphoserine. Residues 302 to 371 form a disordered region; it reads PRLVAPFQPN…APIPPTVPRL (70 aa). Residues 321 to 349 are compositionally biased toward polar residues; the sequence is LSGTSDSASDRTSSNPFSSLSTGSNAHNQ. Low complexity predominate over residues 350–359; the sequence is SLSTSSGPSS.

It belongs to the FAM83 family. Directly interacts (via DUF1669) with casein kinase isoforms CSNK1A1, CSNK1A1L, CSNK1D and CSNK1E. Post-translationally, may be phosphorylated upon EGFR activation. Widely expressed, with relatively higher expression levels in adipose tissues, especially in epididymal and inguinal white adipose tissue (at protein level).

It localises to the cytoplasm. Its subcellular location is the mitochondrion. Functionally, involved in mitochondrial maintenance during adipogenesis. May be acting by playing a role in the maintenance of normal mitochondrial function. The protein is Protein FAM83A of Mus musculus (Mouse).